The primary structure comprises 458 residues: Ribosomal protein uS12 methylthiotransferase RimO (458 aa).

In terms of domain architecture, MTTase N-terminal spans 26–136; that stretch reads PRIGMVSLGC…VLDAVHGAVP (111 aa). [4Fe-4S] cluster is bound by residues C35, C71, C100, C167, C171, and C174. The region spanning 153–389 is the Radical SAM core domain; sequence LTPRHYAYLK…MEKAQAISEA (237 aa). The TRAM domain occupies 392-458; sequence QAKVGRTMQV…SEYDLWGKLT (67 aa).

This sequence belongs to the methylthiotransferase family. RimO subfamily. It depends on [4Fe-4S] cluster as a cofactor.

The protein localises to the cytoplasm. The catalysed reaction is L-aspartate(89)-[ribosomal protein uS12]-hydrogen + (sulfur carrier)-SH + AH2 + 2 S-adenosyl-L-methionine = 3-methylsulfanyl-L-aspartate(89)-[ribosomal protein uS12]-hydrogen + (sulfur carrier)-H + 5'-deoxyadenosine + L-methionine + A + S-adenosyl-L-homocysteine + 2 H(+). Its function is as follows. Catalyzes the methylthiolation of an aspartic acid residue of ribosomal protein uS12. This Jannaschia sp. (strain CCS1) protein is Ribosomal protein uS12 methylthiotransferase RimO.